The chain runs to 234 residues: Short neuropeptide F (234 aa).

The signal sequence occupies residues 1–22 (MYRINLTTFTLLLVLAVGSLMS). Positions 23–56 (ESLHPSDGAINDLYEYLLQREYAAPVSYADHQIK) are excised as a propeptide. A phenylalanine amide mark is found at Phe69 and Phe101. Tryptophan amide is present on Trp132. Position 165 is a phenylalanine amide (Phe165). A compositionally biased stretch (polar residues) spans 181–190 (TTGQQAQPAN). The disordered stretch occupies residues 181–234 (TTGQQAQPANEASEKRAPTQRLRWGRSDPALAKDSSEDKALDVEESENTNADDK). A Tryptophan amide modification is found at Trp204. A propeptide spanning residues 207 to 234 (SDPALAKDSSEDKALDVEESENTNADDK) is cleaved from the precursor.

It belongs to the NPY family. As to expression, expressed in all body parts of larva, pupae and adults.

It localises to the secreted. In terms of biological role, plays a role in controlling food intake and regulating body size. This Anopheles gambiae (African malaria mosquito) protein is Short neuropeptide F.